Reading from the N-terminus, the 214-residue chain is Putative pit accessory protein (214 aa).

The protein belongs to the UPF0111 family.

In terms of biological role, could be involved in orthophosphate transport. This chain is Putative pit accessory protein, found in Rhizobium meliloti (strain 1021) (Ensifer meliloti).